A 39-amino-acid polypeptide reads, in one-letter code: Photosystem II reaction center protein Y (39 aa).

A helical membrane pass occupies residues Leu7–Ile25.

This sequence belongs to the PsbY family. As to quaternary structure, PSII is composed of 1 copy each of membrane proteins PsbA, PsbB, PsbC, PsbD, PsbE, PsbF, PsbH, PsbI, PsbJ, PsbK, PsbL, PsbM, PsbT, PsbX, PsbY, PsbZ, Psb30/Ycf12, peripheral proteins PsbO, CyanoQ (PsbQ), PsbU, PsbV and a large number of cofactors. It forms dimeric complexes.

Its subcellular location is the cellular thylakoid membrane. Loosely associated component of the core of photosystem II (PSII), it is not always seen in crystals. PSII is a light-driven water plastoquinone oxidoreductase, using light energy to abstract electrons from H(2)O, generating a proton gradient subsequently used for ATP formation. The sequence is that of Photosystem II reaction center protein Y from Trichodesmium erythraeum (strain IMS101).